The sequence spans 456 residues: Ribosomal protein uS12 methylthiotransferase RimO (456 aa).

The 116-residue stretch at 11 to 126 (PKVGFVSLGC…VMQAVHTHLP (116 aa)) folds into the MTTase N-terminal domain. [4Fe-4S] cluster contacts are provided by C20, C56, C85, C157, C161, and C164. Positions 143-384 (LTPKHYAYLK…MEVAEEVSAR (242 aa)) constitute a Radical SAM core domain. One can recognise a TRAM domain in the interval 387–456 (QRKVGQTLRV…DGHDLWGEVA (70 aa)).

The protein belongs to the methylthiotransferase family. RimO subfamily. [4Fe-4S] cluster serves as cofactor.

The protein resides in the cytoplasm. The catalysed reaction is L-aspartate(89)-[ribosomal protein uS12]-hydrogen + (sulfur carrier)-SH + AH2 + 2 S-adenosyl-L-methionine = 3-methylsulfanyl-L-aspartate(89)-[ribosomal protein uS12]-hydrogen + (sulfur carrier)-H + 5'-deoxyadenosine + L-methionine + A + S-adenosyl-L-homocysteine + 2 H(+). Its function is as follows. Catalyzes the methylthiolation of an aspartic acid residue of ribosomal protein uS12. This chain is Ribosomal protein uS12 methylthiotransferase RimO, found in Cupriavidus metallidurans (strain ATCC 43123 / DSM 2839 / NBRC 102507 / CH34) (Ralstonia metallidurans).